A 304-amino-acid polypeptide reads, in one-letter code: Transcription factor bHLH94 (304 aa).

Positions 86–107 are disordered; that stretch reads VESHPPPQHRRKRRRTRNCKNK. A compositionally biased stretch (basic residues) spans 92 to 104; that stretch reads PQHRRKRRRTRNC. One can recognise a bHLH domain in the interval 112–163; the sequence is NQRMTHIAVERNRRKQMNEYLAVLRSLMPSSYAQRGDQASIVGGAINYVKEL.

In terms of assembly, homodimer. In terms of tissue distribution, expressed constitutively in roots, leaves, stems, and flowers.

The protein resides in the nucleus. This chain is Transcription factor bHLH94 (BHLH94), found in Arabidopsis thaliana (Mouse-ear cress).